Consider the following 475-residue polypeptide: Glycogen synthase (475 aa).

An ADP-alpha-D-glucose-binding site is contributed by K15.

Belongs to the glycosyltransferase 1 family. Bacterial/plant glycogen synthase subfamily.

It catalyses the reaction [(1-&gt;4)-alpha-D-glucosyl](n) + ADP-alpha-D-glucose = [(1-&gt;4)-alpha-D-glucosyl](n+1) + ADP + H(+). It participates in glycan biosynthesis; glycogen biosynthesis. Its function is as follows. Synthesizes alpha-1,4-glucan chains using ADP-glucose. This is Glycogen synthase from Clostridium kluyveri (strain ATCC 8527 / DSM 555 / NBRC 12016 / NCIMB 10680 / K1).